A 771-amino-acid chain; its full sequence is Kojibiose phosphorylase (771 aa).

Residue 358 to 359 (WD) coordinates substrate. Glu498 (proton donor) is an active-site residue. 611–612 (KQ) lines the substrate pocket.

Belongs to the glycosyl hydrolase 65 family.

The enzyme catalyses kojibiose + phosphate = beta-D-glucose 1-phosphate + D-glucose. Its function is as follows. Catalyzes the reversible phosphorolysis of kojibiose into beta-D-glucose 1-phosphate (Glc1P) and D-glucose. This chain is Kojibiose phosphorylase (kojP), found in Caldanaerobacter subterraneus subsp. tengcongensis (strain DSM 15242 / JCM 11007 / NBRC 100824 / MB4) (Thermoanaerobacter tengcongensis).